The following is a 629-amino-acid chain: DNA topoisomerase 4 subunit B (629 aa).

ATP-binding positions include Tyr-4, Asn-41, Asp-68, 109–115 (GLHGVGI), and Lys-333. Residues 411-524 (AELFLVEGDS…AGHVYVAMPP (114 aa)) enclose the Toprim domain. Glu-417, Asp-489, and Asp-491 together coordinate Mg(2+).

It belongs to the type II topoisomerase family. ParE type 1 subfamily. In terms of assembly, heterotetramer composed of ParC and ParE. Mg(2+) is required as a cofactor. Requires Mn(2+) as cofactor. Ca(2+) serves as cofactor.

It carries out the reaction ATP-dependent breakage, passage and rejoining of double-stranded DNA.. Its function is as follows. Topoisomerase IV is essential for chromosome segregation. It relaxes supercoiled DNA. Performs the decatenation events required during the replication of a circular DNA molecule. In Pseudomonas aeruginosa (strain ATCC 15692 / DSM 22644 / CIP 104116 / JCM 14847 / LMG 12228 / 1C / PRS 101 / PAO1), this protein is DNA topoisomerase 4 subunit B.